The sequence spans 245 residues: Octanoyltransferase (245 aa).

Residues 54 to 238 (GEATELVWLL…AFENIFGETR (185 aa)) enclose the BPL/LPL catalytic domain. Substrate contacts are provided by residues 92 to 99 (RGGQLTYH), 167 to 169 (AIG), and 180 to 182 (GIA). Cys198 functions as the Acyl-thioester intermediate in the catalytic mechanism.

Belongs to the LipB family.

The protein localises to the cytoplasm. It carries out the reaction octanoyl-[ACP] + L-lysyl-[protein] = N(6)-octanoyl-L-lysyl-[protein] + holo-[ACP] + H(+). The protein operates within protein modification; protein lipoylation via endogenous pathway; protein N(6)-(lipoyl)lysine from octanoyl-[acyl-carrier-protein]: step 1/2. Catalyzes the transfer of endogenously produced octanoic acid from octanoyl-acyl-carrier-protein onto the lipoyl domains of lipoate-dependent enzymes. Lipoyl-ACP can also act as a substrate although octanoyl-ACP is likely to be the physiological substrate. The polypeptide is Octanoyltransferase (Rhodopseudomonas palustris (strain TIE-1)).